The primary structure comprises 217 residues: Elongation factor Ts (217 aa).

The interval 82 to 85 (TDFV) is involved in Mg(2+) ion dislocation from EF-Tu.

The protein belongs to the EF-Ts family.

The protein resides in the cytoplasm. Its function is as follows. Associates with the EF-Tu.GDP complex and induces the exchange of GDP to GTP. It remains bound to the aminoacyl-tRNA.EF-Tu.GTP complex up to the GTP hydrolysis stage on the ribosome. This chain is Elongation factor Ts, found in Desulfitobacterium hafniense (strain DSM 10664 / DCB-2).